The following is a 122-amino-acid chain: Large ribosomal subunit protein bL12 (122 aa).

It belongs to the bacterial ribosomal protein bL12 family. Homodimer. Part of the ribosomal stalk of the 50S ribosomal subunit. Forms a multimeric L10(L12)X complex, where L10 forms an elongated spine to which 2 to 4 L12 dimers bind in a sequential fashion. Binds GTP-bound translation factors.

In terms of biological role, forms part of the ribosomal stalk which helps the ribosome interact with GTP-bound translation factors. Is thus essential for accurate translation. This chain is Large ribosomal subunit protein bL12, found in Pseudomonas entomophila (strain L48).